The chain runs to 418 residues: UDP-N-acetylglucosamine 1-carboxyvinyltransferase (418 aa).

Residue 22 to 23 (KN) coordinates phosphoenolpyruvate. Residue Arg92 coordinates UDP-N-acetyl-alpha-D-glucosamine. The active-site Proton donor is Cys116. The residue at position 116 (Cys116) is a 2-(S-cysteinyl)pyruvic acid O-phosphothioketal. Residues 121-125 (RPIDL), Asp305, and Leu327 each bind UDP-N-acetyl-alpha-D-glucosamine.

Belongs to the EPSP synthase family. MurA subfamily.

It is found in the cytoplasm. The catalysed reaction is phosphoenolpyruvate + UDP-N-acetyl-alpha-D-glucosamine = UDP-N-acetyl-3-O-(1-carboxyvinyl)-alpha-D-glucosamine + phosphate. It functions in the pathway cell wall biogenesis; peptidoglycan biosynthesis. In terms of biological role, cell wall formation. Adds enolpyruvyl to UDP-N-acetylglucosamine. This Campylobacter jejuni subsp. jejuni serotype O:23/36 (strain 81-176) protein is UDP-N-acetylglucosamine 1-carboxyvinyltransferase.